The sequence spans 857 residues: Gelation factor (857 aa).

Met1 is modified (blocked amino end (Met)). The segment at 1–250 (MAAAPSGKTW…EKKRRETSDA (250 aa)) is actin-binding. 2 Calponin-homology (CH) domains span residues 12 to 117 (DVQK…LRYQ) and 125 to 227 (NSPK…DYAL). Residues 229-246 (KEKRDADALAALEKKRRE) are regulatory site. Filamin repeat units follow at residues 245-346 (RETS…NVKI), 347-446 (DGSD…EVKI), 447-545 (LNSD…SIHI), 546-645 (KPAA…TVTV), 646-747 (KPAP…DVKC), and 763-837 (FTVA…KQVL). The tract at residues 832–857 (PFKQVLGNPGKKNPEVKSFTTTRTAN) is disordered.

As to quaternary structure, homodimer.

In terms of biological role, F-actin cross-linking protein. In Dictyostelium discoideum (Social amoeba), this protein is Gelation factor (abpC).